Reading from the N-terminus, the 311-residue chain is 1D-myo-inositol 2-acetamido-2-deoxy-alpha-D-glucopyranoside deacetylase (311 aa).

Zn(2+)-binding residues include His-29, Asp-32, and His-162.

Belongs to the MshB deacetylase family. Requires Zn(2+) as cofactor.

It catalyses the reaction 1D-myo-inositol 2-acetamido-2-deoxy-alpha-D-glucopyranoside + H2O = 1D-myo-inositol 2-amino-2-deoxy-alpha-D-glucopyranoside + acetate. Its function is as follows. Catalyzes the deacetylation of 1D-myo-inositol 2-acetamido-2-deoxy-alpha-D-glucopyranoside (GlcNAc-Ins) in the mycothiol biosynthesis pathway. This Corynebacterium efficiens (strain DSM 44549 / YS-314 / AJ 12310 / JCM 11189 / NBRC 100395) protein is 1D-myo-inositol 2-acetamido-2-deoxy-alpha-D-glucopyranoside deacetylase.